The chain runs to 310 residues: Methionyl-tRNA formyltransferase (310 aa).

Position 111–114 (111–114 (SILP)) interacts with (6S)-5,6,7,8-tetrahydrofolate.

It belongs to the Fmt family.

The enzyme catalyses L-methionyl-tRNA(fMet) + (6R)-10-formyltetrahydrofolate = N-formyl-L-methionyl-tRNA(fMet) + (6S)-5,6,7,8-tetrahydrofolate + H(+). In terms of biological role, attaches a formyl group to the free amino group of methionyl-tRNA(fMet). The formyl group appears to play a dual role in the initiator identity of N-formylmethionyl-tRNA by promoting its recognition by IF2 and preventing the misappropriation of this tRNA by the elongation apparatus. The chain is Methionyl-tRNA formyltransferase from Methylobacterium nodulans (strain LMG 21967 / CNCM I-2342 / ORS 2060).